A 320-amino-acid chain; its full sequence is Elongation factor Ts (320 aa).

An involved in Mg(2+) ion dislocation from EF-Tu region spans residues 82–85 (TDFV).

This sequence belongs to the EF-Ts family.

The protein resides in the cytoplasm. In terms of biological role, associates with the EF-Tu.GDP complex and induces the exchange of GDP to GTP. It remains bound to the aminoacyl-tRNA.EF-Tu.GTP complex up to the GTP hydrolysis stage on the ribosome. The chain is Elongation factor Ts from Flavobacterium johnsoniae (strain ATCC 17061 / DSM 2064 / JCM 8514 / BCRC 14874 / CCUG 350202 / NBRC 14942 / NCIMB 11054 / UW101) (Cytophaga johnsonae).